We begin with the raw amino-acid sequence, 56 residues long: Defensin-1 (56 aa).

The signal sequence occupies residues 1–24 (MKAIVVLLILALILCLYAMTTVEG). Disulfide bonds link cysteine 26-cysteine 45, cysteine 31-cysteine 53, and cysteine 35-cysteine 55.

It is found in the secreted. In terms of biological role, antibacterial protein involved in the immune response to septic injury. When combined with 14.026 kDa and 14.059 kDa hemolymph antimicrobial peptides, it has a strong cooperative activity against the Gram-positive bacteria B.subtilis and S.aureus, and against the Gram-negative bacteria E.coli DH5-alpha and K.pneumoniae ATCC 138833. Does not show detectable antibacterial activity when present alone. Has no hemolytic activity in human erythrocytes. The protein is Defensin-1 of Centruroides limpidus (Mexican scorpion).